We begin with the raw amino-acid sequence, 422 residues long: GTPase Obg (422 aa).

Residues 1-156 (MKFIDEVNVL…FALRLVLKVL (156 aa)) form the Obg domain. The 168-residue stretch at 157–324 (ADVGLVGKPS…LKAAIFKMLE (168 aa)) folds into the OBG-type G domain. GTP contacts are provided by residues 163 to 170 (GKPSAGKS), 188 to 192 (FTTLV), 209 to 212 (DLPG), 278 to 281 (NKSD), and 305 to 307 (SAL). Mg(2+) is bound by residues S170 and T190. The OCT domain occupies 342 to 420 (NITLDRDALK…IGNFEFDWSD (79 aa)).

This sequence belongs to the TRAFAC class OBG-HflX-like GTPase superfamily. OBG GTPase family. Monomer. It depends on Mg(2+) as a cofactor.

It localises to the cytoplasm. An essential GTPase which binds GTP, GDP and possibly (p)ppGpp with moderate affinity, with high nucleotide exchange rates and a fairly low GTP hydrolysis rate. Plays a role in control of the cell cycle, stress response, ribosome biogenesis and in those bacteria that undergo differentiation, in morphogenesis control. The sequence is that of GTPase Obg from Metamycoplasma arthritidis (strain 158L3-1) (Mycoplasma arthritidis).